Here is a 335-residue protein sequence, read N- to C-terminus: 2-acylglycerol O-acyltransferase 2-B (335 aa).

2 consecutive transmembrane segments (helical) span residues 24 to 44 (WAVSFLAMAQCCIALYILLLF) and 104 to 124 (YIMGFHPHGVLVVGAFGNFCT). The N-linked (GlcNAc...) asparagine glycan is linked to Asn206.

This sequence belongs to the diacylglycerol acyltransferase family.

The protein localises to the endoplasmic reticulum membrane. Its subcellular location is the cytoplasm. It is found in the perinuclear region. The catalysed reaction is a 2-acylglycerol + an acyl-CoA = a 1,2-diacylglycerol + CoA. It carries out the reaction a 2-acylglycerol + an acyl-CoA = a 1,2-diacyl-sn-glycerol + CoA. The enzyme catalyses a 2-acylglycerol + an acyl-CoA = a 2,3-diacyl-sn-glycerol + CoA. It catalyses the reaction a 1-acylglycerol + an acyl-CoA = a 1,2-diacylglycerol + CoA. The catalysed reaction is a 1-acylglycerol + an acyl-CoA = a 1,3-diacylglycerol + CoA. It carries out the reaction 1-O-alkylglycerol + an acyl-CoA = 1-O-alkyl-3-acylglycerol + CoA. The enzyme catalyses an acyl-CoA + a 1,2-diacyl-sn-glycerol = a triacyl-sn-glycerol + CoA. The protein operates within glycerolipid metabolism; triacylglycerol biosynthesis. Catalyzes the formation of diacylglycerol from 2-monoacylglycerol and fatty acyl-CoA. In terms of biological role, involved in glycerolipid synthesis and lipid metabolism. Catalyzes the formation of diacylglycerol, the precursor of triacylglycerol, by transferring the acyl chain of a fatty acyl-CoA to a monoacylglycerol. Plays a central role in absorption of dietary fat in the small intestine by catalyzing the resynthesis of triacylglycerol in enterocytes. Has a preference toward monoacylglycerols containing unsaturated fatty acids in an order of C18:3 &gt; C18:2 &gt; C18:1 &gt; C18:0 at sn-2. Able to use 1-monoalkylglycerol (1-MAkG, 1-O-alkylglycerol) as an acyl acceptor for the synthesis of monoalkyl-monoacylglycerol (MAMAG, 1-O-alkyl-3-acylglycerol or 1-O-alkyl-2-acylglycerol) and subsequently, with lower efficiency, may add another acyl chain producing monoalkyl-diacylglycerol (MADAG, 1-O-alkyl-2,3-diacylglycerol). Possesses weak but significant activity with diacylglycerol as substrate, producing triacylglycerol (triacyl-sn-glycerol). The sequence is that of 2-acylglycerol O-acyltransferase 2-B (mogat2-b) from Xenopus laevis (African clawed frog).